The chain runs to 229 residues: MEISAINLSLSVAVSSMLWSLPLAIFVAWLLARKNFYGKSLITGVIHLPLVLPPVVIGYLLLVAMGRNGFIGKYLYQWFGLSFGFSWKGAVLSSAVVAFPLVVRAIRLSLENIDIKLEQAAQTLGASAWRVFFTITLPLSLPGVLAGLVLGFARSLGEFGATITFVSNIAGETQTIPLAMYSFIQTPGAEEQTARLCLFAIILSLISLLLSEWLSKRMQKKLGQGNVAD.

In terms of domain architecture, ABC transmembrane type-1 spans 6 to 214 (INLSLSVAVS…LISLLLSEWL (209 aa)). 5 helical membrane passes run 12-32 (VAVSSMLWSLPLAIFVAWLLA), 45-65 (VIHLPLVLPPVVIGYLLLVAM), 83-103 (FGFSWKGAVLSSAVVAFPLVV), 132-152 (FFTITLPLSLPGVLAGLVLGF), and 196-216 (LCLFAIILSLISLLLSEWLSK).

It belongs to the binding-protein-dependent transport system permease family. CysTW subfamily.

The protein resides in the cell inner membrane. In terms of biological role, part of the binding-protein-dependent transport system for molybdenum; probably responsible for the translocation of the substrate across the membrane. The sequence is that of Molybdenum transport system permease protein ModB (modB) from Haemophilus influenzae (strain ATCC 51907 / DSM 11121 / KW20 / Rd).